The chain runs to 356 residues: Phospho-2-dehydro-3-deoxyheptonate aldolase, Tyr-sensitive (356 aa).

It belongs to the class-I DAHP synthase family. The cofactor is a divalent metal cation.

The enzyme catalyses D-erythrose 4-phosphate + phosphoenolpyruvate + H2O = 7-phospho-2-dehydro-3-deoxy-D-arabino-heptonate + phosphate. The protein operates within metabolic intermediate biosynthesis; chorismate biosynthesis; chorismate from D-erythrose 4-phosphate and phosphoenolpyruvate: step 1/7. With respect to regulation, specifically feedback inhibited by tyrosine with 50% inhibition observed at 9 microM tyrosine, pH 7.0. In terms of biological role, stereospecific condensation of phosphoenolpyruvate (PEP) and D-erythrose-4-phosphate (E4P) giving rise to 3-deoxy-D-arabino-heptulosonate-7-phosphate (DAHP). This chain is Phospho-2-dehydro-3-deoxyheptonate aldolase, Tyr-sensitive (aroF), found in Escherichia coli (strain K12).